The chain runs to 242 residues: Small ribosomal subunit protein uS2 (242 aa).

This sequence belongs to the universal ribosomal protein uS2 family.

This is Small ribosomal subunit protein uS2 from Mannheimia succiniciproducens (strain KCTC 0769BP / MBEL55E).